The following is a 174-amino-acid chain: Pituitary tumor-transforming gene 1 protein-interacting protein (174 aa).

The signal sequence occupies residues 1–29; that stretch reads MASAVLGLTLRWVMFLSAVLLLLLPGASA. The Extracellular portion of the chain corresponds to 30–93; the sequence is QEPPGVGCSE…RWGVCWVNFE (64 aa). The region spanning 36-89 is the PSI domain; the sequence is GCSEYTNRSCEECLRNVSCLWCNENKACLDYPVRKILPPASLCKLSSARWGVCW. Residues N42 and N51 are each glycosylated (N-linked (GlcNAc...) asparagine). A helical membrane pass occupies residues 94 to 114; it reads ALIITMSVLGGSVLLGITVCC. The Cytoplasmic portion of the chain corresponds to 115–174; it reads CCCCRRKRSRKPDKSDERAMREQEERRVRQEERRAEMKSRHDEIRKKYGLFKEQNPYEKF. The interval 126–155 is disordered; the sequence is PDKSDERAMREQEERRVRQEERRAEMKSRH. Positions 127-163 form a coiled coil; it reads DKSDERAMREQEERRVRQEERRAEMKSRHDEIRKKYG. Y171 carries the phosphotyrosine modification.

Interacts with PTTG1.

Its subcellular location is the cell membrane. It is found in the cytoplasm. It localises to the nucleus. Its function is as follows. May facilitate PTTG1 nuclear translocation. The sequence is that of Pituitary tumor-transforming gene 1 protein-interacting protein (Pttg1ip) from Rattus norvegicus (Rat).